The following is a 325-amino-acid chain: Ribonucleoside-diphosphate reductase small chain (325 aa).

D76, E107, and H110 together coordinate Fe cation. Residue Y114 is part of the active site. E170, E204, and H207 together coordinate Fe cation.

This sequence belongs to the ribonucleoside diphosphate reductase small chain family. In terms of assembly, heterodimer of a large and a small subunit. The cofactor is Fe cation.

It carries out the reaction a 2'-deoxyribonucleoside 5'-diphosphate + [thioredoxin]-disulfide + H2O = a ribonucleoside 5'-diphosphate + [thioredoxin]-dithiol. In terms of biological role, provides the precursors necessary for DNA synthesis. Catalyzes the biosynthesis of deoxyribonucleotides from the corresponding ribonucleotides. The chain is Ribonucleoside-diphosphate reductase small chain from Encephalitozoon cuniculi (strain GB-M1) (Microsporidian parasite).